We begin with the raw amino-acid sequence, 578 residues long: Tetratricopeptide repeat protein ttc-39B (578 aa).

TPR repeat units follow at residues 297 to 330, 481 to 514, and 522 to 554; these read AIML…QDVY, CLYY…ESSI, and PNAT…YKSY.

This Caenorhabditis elegans protein is Tetratricopeptide repeat protein ttc-39B.